A 163-amino-acid chain; its full sequence is Putative 4-hydroxy-4-methyl-2-oxoglutarate aldolase (163 aa).

Substrate-binding positions include 76–79 (GDMI) and Arg98. Position 99 (Asp99) interacts with a divalent metal cation.

Belongs to the class II aldolase/RraA-like family. Homotrimer. A divalent metal cation serves as cofactor.

It carries out the reaction 4-hydroxy-4-methyl-2-oxoglutarate = 2 pyruvate. It catalyses the reaction oxaloacetate + H(+) = pyruvate + CO2. Its function is as follows. Catalyzes the aldol cleavage of 4-hydroxy-4-methyl-2-oxoglutarate (HMG) into 2 molecules of pyruvate. Also contains a secondary oxaloacetate (OAA) decarboxylase activity due to the common pyruvate enolate transition state formed following C-C bond cleavage in the retro-aldol and decarboxylation reactions. This chain is Putative 4-hydroxy-4-methyl-2-oxoglutarate aldolase, found in Pseudomonas fluorescens.